The primary structure comprises 790 residues: MKAFGPPHEGPLQGLVASRIETYGGRHRASAQSTAGRLYPRGYPVLDPSRRRLQQYVPFARGSGQARGLSPMRLRDPEPEKRHGGHVGAGLLHSPKLKELTKAHELEVRLHTFSMFGMPRLPPEDRRHWEIGEGGDSGLTIEKSWRELVPGHKEMSQELCHQQEALWELLTTELIYVRKLKIMTDLLAAGLLNLQRVGLLMEVSAETLFGNVPSLIRTHRSFWDEVLGPTLEETRASGQPLDPIGLQSGFLTFGQRFHPYVQYCLRVKQTMAYAREQQETNPLFHAFVQWCEKHKRSGRQMLCDLLIKPHQRITKYPLLLHAVLKRSPEARAQEALNAMIEAVESFLRHINGQVRQGEEQESLAAAAQRIGPYEVLEPPSDEVEKNLRPFSTLDLTSPMLGVASEHTRQLLLEGPVRVKEGREGKLDVYLFLFSDVLLVTKPQRKADKAKVIRPPLMLEKLVCQPLRDPNSFLLIHLTEFQCVSSALLVHCPSPTDRAQWLEKTQQAQAALQKLKAEEYVQQKRELLTLYRDQDRESPSTRPSTPSLEGSQSSAEGRTPEFSTIIPHLVVTEDTDEDAPLVPDDTSDSGYGTLIPGTPTGSRSPLSRLRQRALRRDPRLTFSTLELRDIPLRPHPPDPQAPQRRSAPELPEGILKGGSLPQEDPPTWSEEEDGASERGNVVVETLHRARLRGQLPSSPTHADSAGESPWESSGEEEEEGPLFLKAGHTSLRPMRAEDMLREIREELASQRIEGAEEPRDSRPRKLTRAQLQRMRGPHIIQLDTPLSASEV.

The interval 63–91 (SGQARGLSPMRLRDPEPEKRHGGHVGAGL) is disordered. The span at 73–82 (RLRDPEPEKR) shows a compositional bias: basic and acidic residues. Residues 161–353 (HQQEALWELL…ESFLRHINGQ (193 aa)) enclose the DH domain. In terms of domain architecture, PH spans 409–509 (QLLLEGPVRV…WLEKTQQAQA (101 aa)). Composition is skewed to basic and acidic residues over residues 529–538 (LYRDQDRESP) and 625–635 (ELRDIPLRPHP). Disordered stretches follow at residues 529 to 677 (LYRD…ASER), 690 to 730 (LRGQ…HTSL), and 748 to 790 (SQRI…ASEV). Over residues 748-762 (SQRIEGAEEPRDSRP) the composition is skewed to basic and acidic residues.

As to quaternary structure, interacts with MYH10. Interacts with ELMO1 and EZR (in an open conformation). Interacts with CSPP1. In terms of tissue distribution, highest expression in the placenta. Low levels in small intestine, lung, liver, kidney, thymus and heart.

It localises to the cell projection. The protein localises to the microvillus. It is found in the cytoplasm. Its subcellular location is the cytoskeleton. The protein resides in the spindle. It localises to the spindle pole. The protein localises to the cleavage furrow. In terms of biological role, guanine nucleotide exchange factor activating the small GTPase RHOA, which, in turn, induces myosin filament formation. Also activates RHOG. Does not activate RAC1, or to a much lower extent than RHOA and RHOG. Part of a functional unit, involving PLEKHG6, MYH10 and RHOA, at the cleavage furrow to advance furrow ingression during cytokinesis. In epithelial cells, required for the formation of microvilli and membrane ruffles on the apical pole. Along with EZR, required for normal macropinocytosis. This is Pleckstrin homology domain-containing family G member 6 (PLEKHG6) from Homo sapiens (Human).